Reading from the N-terminus, the 181-residue chain is Probable cobalt-precorrin-6B C(15)-methyltransferase (decarboxylating) (181 aa).

S-adenosyl-L-methionine is bound by residues T16, 40–44 (GCGSG), D61, and A89.

The protein belongs to the methyltransferase superfamily. Archaeal-type CbiT family.

The enzyme catalyses Co-precorrin-6B + S-adenosyl-L-methionine = Co-precorrin-7 + S-adenosyl-L-homocysteine + CO2. It functions in the pathway cofactor biosynthesis; adenosylcobalamin biosynthesis; cob(II)yrinate a,c-diamide from sirohydrochlorin (anaerobic route): step 8/10. Functionally, catalyzes the methylation of C-15 in cobalt-precorrin-6B followed by the decarboxylation of C-12 to form cobalt-precorrin-7. The chain is Probable cobalt-precorrin-6B C(15)-methyltransferase (decarboxylating) from Methanococcus maripaludis (strain C7 / ATCC BAA-1331).